We begin with the raw amino-acid sequence, 254 residues long: Probable transcriptional regulatory protein HDEF_0869 (254 aa).

Residues 1–20 (MAGHSKWANTKHRKAAQDAK) form a disordered region.

This sequence belongs to the TACO1 family.

It localises to the cytoplasm. The polypeptide is Probable transcriptional regulatory protein HDEF_0869 (Hamiltonella defensa subsp. Acyrthosiphon pisum (strain 5AT)).